The primary structure comprises 296 residues: Glycine--tRNA ligase alpha subunit (296 aa).

The protein belongs to the class-II aminoacyl-tRNA synthetase family. As to quaternary structure, tetramer of two alpha and two beta subunits.

Its subcellular location is the cytoplasm. The catalysed reaction is tRNA(Gly) + glycine + ATP = glycyl-tRNA(Gly) + AMP + diphosphate. The polypeptide is Glycine--tRNA ligase alpha subunit (Listeria monocytogenes serotype 4b (strain CLIP80459)).